The sequence spans 116 residues: Chaperone protein SicP (116 aa).

Belongs to the SicP family.

It is found in the cytoplasm. In terms of biological role, molecular chaperone required for SptP stabilization and secretion. The chain is Chaperone protein SicP (sicP) from Salmonella paratyphi A (strain ATCC 9150 / SARB42).